A 114-amino-acid polypeptide reads, in one-letter code: Probable prefoldin subunit 2 (114 aa).

The protein belongs to the prefoldin subunit beta family. As to quaternary structure, heterohexamer of two PFD-alpha type and four PFD-beta type subunits.

Its function is as follows. Binds specifically to cytosolic chaperonin (c-CPN) and transfers target proteins to it. Binds to nascent polypeptide chain and promotes folding in an environment in which there are many competing pathways for nonnative proteins. This is Probable prefoldin subunit 2 from Schizosaccharomyces pombe (strain 972 / ATCC 24843) (Fission yeast).